A 334-amino-acid chain; its full sequence is N-acetyl-gamma-glutamyl-phosphate reductase (334 aa).

Cysteine 154 is an active-site residue.

It belongs to the NAGSA dehydrogenase family. Type 1 subfamily.

The protein localises to the cytoplasm. It carries out the reaction N-acetyl-L-glutamate 5-semialdehyde + phosphate + NADP(+) = N-acetyl-L-glutamyl 5-phosphate + NADPH + H(+). It participates in amino-acid biosynthesis; L-arginine biosynthesis; N(2)-acetyl-L-ornithine from L-glutamate: step 3/4. In terms of biological role, catalyzes the NADPH-dependent reduction of N-acetyl-5-glutamyl phosphate to yield N-acetyl-L-glutamate 5-semialdehyde. The polypeptide is N-acetyl-gamma-glutamyl-phosphate reductase (Salmonella typhimurium (strain LT2 / SGSC1412 / ATCC 700720)).